Reading from the N-terminus, the 292-residue chain is Nucleophosmin (292 aa).

N-acetylmethionine is present on M1. A necessary for interaction with APEX1 region spans residues M1–V117. Residues M1–T185 are required for interaction with SENP3. Position 4 is a phosphoserine; by PLK1 and PLK2 (S4). S10 is subject to Phosphoserine. K27 is covalently cross-linked (Glycyl lysine isopeptide (Lys-Gly) (interchain with G-Cter in SUMO2)). The residue at position 32 (K32) is an N6-acetyllysine; alternate. K32 participates in a covalent cross-link: Glycyl lysine isopeptide (Lys-Gly) (interchain with G-Cter in SUMO1); alternate. Residue K32 forms a Glycyl lysine isopeptide (Lys-Gly) (interchain with G-Cter in SUMO2); alternate linkage. Position 43 is a phosphoserine (S43). The residue at position 67 (Y67) is a Phosphotyrosine. S70 is subject to Phosphoserine. A phosphothreonine mark is found at T75 and T95. Residues S125 and S139 each carry the phosphoserine modification. The disordered stretch occupies residues M138–K248. K141 is covalently cross-linked (Glycyl lysine isopeptide (Lys-Gly) (interchain with G-Cter in SUMO2)). The residue at position 150 (K150) is an N6-acetyllysine; alternate. Residue K150 forms a Glycyl lysine isopeptide (Lys-Gly) (interchain with G-Cter in SUMO2); alternate linkage. Positions P152 to K157 match the Nuclear localization signal motif. An N6-acetyllysine modification is found at K154. Residues D159 to E186 are compositionally biased toward acidic residues. The segment at E186 to K214 is interaction with NOP2. Positions E187–P199 are enriched in basic and acidic residues. The Nuclear localization signal signature appears at P190 to R196. T198 is modified (phosphothreonine; by CDK1 and CDK2). Over residues K201 to G210 the composition is skewed to polar residues. S206 is subject to ADP-ribosylserine. At K211 the chain carries N6-acetyllysine. K214 is covalently cross-linked (Glycyl lysine isopeptide (Lys-Gly) (interchain with G-Cter in SUMO2)). A Phosphothreonine; by CDK1 modification is found at T217. Positions K221–P233 are enriched in basic and acidic residues. S225 carries the post-translational modification Phosphoserine. An N6-acetyllysine modification is found at K227. K228 is subject to N6-acetyllysine; alternate. K228 is covalently cross-linked (Glycyl lysine isopeptide (Lys-Gly) (interchain with G-Cter in SUMO); alternate). A phosphothreonine; by CDK1 mark is found at T232 and T235. Residues S240 and S241 each carry the phosphoserine modification. The segment at S241 to L292 is required for nucleolar localization. A Glycyl lysine isopeptide (Lys-Gly) (interchain with G-Cter in SUMO1); alternate cross-link involves residue K246. Glycyl lysine isopeptide (Lys-Gly) (interchain with G-Cter in SUMO2); alternate cross-links involve residues K246 and K248. K248 is subject to N6-acetyllysine; alternate. At S252 the chain carries Phosphoserine. Position 255 is an N6-acetyllysine; alternate (K255). A Glycyl lysine isopeptide (Lys-Gly) (interchain with G-Cter in SUMO1); alternate cross-link involves residue K255. A Glycyl lysine isopeptide (Lys-Gly) (interchain with G-Cter in SUMO2); alternate cross-link involves residue K255. The residue at position 258 (S258) is a Phosphoserine. Residues K261, K265, and K271 each participate in a glycyl lysine isopeptide (Lys-Gly) (interchain with G-Cter in SUMO2); alternate cross-link. A Glycyl lysine isopeptide (Lys-Gly) (interchain with G-Cter in SUMO); alternate cross-link involves residue K261. An N6-acetyllysine; alternate mark is found at K265 and K271. K265 participates in a covalent cross-link: Glycyl lysine isopeptide (Lys-Gly) (interchain with G-Cter in SUMO1); alternate. N6-succinyllysine; alternate is present on K265. T277 is modified (phosphothreonine). K290 carries the post-translational modification N6-acetyllysine.

It belongs to the nucleoplasmin family. In terms of assembly, decamer formed by two pentameric rings associated in a head-to-head fashion. Disulfide-linked dimers under certain conditions. Interacts with NSUN2 and SENP3. The SWAP complex consists of NPM1, NCL, PARP1 and SWAP70. Interacts with the methylated form of RPS10. Interacts (via N-terminal domain) with APEX1; the interaction is RNA-dependent and decreases peroxide-damaged cells. Interacts with NEK2. Interacts with ROCK2 and BRCA2. Interacts with RPGR. Interacts with CENPW. Interacts with EIF2AK2/PKR. Interacts with DDX31; this interaction prevents interaction between NPM1 and HDM2. Interacts with MYC; competitive with NOP53. Interacts with NOP53; the interaction is direct and competitive with MYC. Interacts with LRRC34. Interacts with RRP1B. Interacts with NPM3. Interacts with ALKBH2. Interacts with TTF1 (via C-terminal region). Interacts with NOP2. Interacts with ARID3C (via REKLES DOMAIN); the interaction mediates ARID3C nuclear shuttling. Acetylated at C-terminal lysine residues, thereby increasing affinity to histones. Post-translationally, ADP-ribosylated. In terms of processing, phosphorylated at Ser-4 by PLK1 and PLK2. Phosphorylation at Ser-4 by PLK2 in S phase is required for centriole duplication and is sufficient to trigger centriole replication. Phosphorylation at Ser-4 by PLK1 takes place during mitosis. Phosphorylated by CDK2 at Ser-125 and Thr-198. Phosphorylation at Thr-198 may trigger initiation of centrosome duplication. Phosphorylated by CDK1 at Thr-198, Thr-217, Thr-232 and Thr-235 during cell mitosis. When these four sites are phosphorated, RNA-binding activity seem to be abolished. May be phosphorylated at Ser-70 by NEK2. The Thr-198 phosphorylated form has higher affinity for ROCK2. Sumoylated by ARF. Post-translationally, ubiquitinated. Ubiquitination leads to proteasomal degradation. Deubiquitinated by USP36. Expressed in B-cells that have been induced to switch to various Ig isotypes.

The protein localises to the nucleus. It is found in the nucleolus. The protein resides in the nucleoplasm. It localises to the cytoplasm. Its subcellular location is the cytoskeleton. The protein localises to the microtubule organizing center. It is found in the centrosome. Functionally, involved in diverse cellular processes such as ribosome biogenesis, centrosome duplication, protein chaperoning, histone assembly, cell proliferation, and regulation of tumor suppressors p53/TP53 and ARF. Binds ribosome presumably to drive ribosome nuclear export. Associated with nucleolar ribonucleoprotein structures and bind single-stranded nucleic acids. Acts as a chaperonin for the core histones H3, H2B and H4. Stimulates APEX1 endonuclease activity on apurinic/apyrimidinic (AP) double-stranded DNA but inhibits APEX1 endonuclease activity on AP single-stranded RNA. May exert a control of APEX1 endonuclease activity within nucleoli devoted to repair AP on rDNA and the removal of oxidized rRNA molecules. In concert with BRCA2, regulates centrosome duplication. Regulates centriole duplication: phosphorylation by PLK2 is able to trigger centriole replication. Negatively regulates the activation of EIF2AK2/PKR and suppresses apoptosis through inhibition of EIF2AK2/PKR autophosphorylation. Antagonizes the inhibitory effect of ATF5 on cell proliferation and relieves ATF5-induced G2/M blockade. In complex with MYC enhances the transcription of MYC target genes. May act as chaperonin or cotransporter in the nucleolar localization of transcription termination factor TTF1. This Mus musculus (Mouse) protein is Nucleophosmin (Npm1).